The chain runs to 314 residues: MANYQNLLVVIDPSQDDQPALRRAVYIVQRNGGRIKAFLPIYDLSYEMTTLLSPEEGSTMRKGVTSQRTAWLKQQAYYYLEAGIDIEIKVVWHNRPYEAIIQEVITGNHDLLLKMTHKHDKLGSLIFTPLDWQLLRKCPCPVWMVKDQIWPDQGSVVVAVNLSNEESYHHELNLKLVKETQELANQVMKNPEIHLVSAYPVAPLNIAIELPDFNPSVYNHALRGQHLIAMKELRQTFCIDEKYTHIHEGLPESVIPQMCDEMNAGIIVLGILGRTGLSAAFLGNTAEHVIDHLKCDILTIKPDGFECPIKAAKE.

The protein belongs to the universal stress protein A family.

It is found in the cytoplasm. Required for resistance to DNA-damaging agents. The protein is Universal stress protein E (uspE) of Photorhabdus laumondii subsp. laumondii (strain DSM 15139 / CIP 105565 / TT01) (Photorhabdus luminescens subsp. laumondii).